A 308-amino-acid polypeptide reads, in one-letter code: UDP-N-acetylenolpyruvoylglucosamine reductase (308 aa).

In terms of domain architecture, FAD-binding PCMH-type spans 35–200 (RVGGPAQVLF…TSARFRGEPM (166 aa)). Residue Arg180 is part of the active site. The segment covering 211 to 226 (EVQRHRETAQPVREKT) has biased composition (basic and acidic residues). The disordered stretch occupies residues 211 to 236 (EVQRHRETAQPVREKTGGSTFKNPPG). Catalysis depends on Ser229, which acts as the Proton donor. The active site involves Glu299.

It belongs to the MurB family. Requires FAD as cofactor.

The protein resides in the cytoplasm. The enzyme catalyses UDP-N-acetyl-alpha-D-muramate + NADP(+) = UDP-N-acetyl-3-O-(1-carboxyvinyl)-alpha-D-glucosamine + NADPH + H(+). It functions in the pathway cell wall biogenesis; peptidoglycan biosynthesis. Cell wall formation. This is UDP-N-acetylenolpyruvoylglucosamine reductase from Rhodopseudomonas palustris (strain BisB18).